A 300-amino-acid chain; its full sequence is Chaperone protein dnaJ 50 (300 aa).

The signal sequence occupies residues 1-27; it reads MAPPVTERWCLALILLFLSLFVQSSTA. The Lumenal segment spans residues 28-122; it reads IYCGAEDCYA…RAKYGHKSDP (95 aa). Positions 34–98 constitute a J domain; the sequence is DCYALLGVAQ…TTRAQYDYAI (65 aa). N-linked (GlcNAc...) asparagine glycans are attached at residues Asn-46 and Asn-88. Residues 123–143 traverse the membrane as a helical segment; sequence RAVLVGLLVVLSAFQYLNNVA. The Cytoplasmic segment spans residues 144–206; it reads RYNEAIATVK…LQIKGAEKPS (63 aa). The helical transmembrane segment at 207-227 threads the bilayer; the sequence is VWELLGVRFILLPYTIIKLLV. The Lumenal portion of the chain corresponds to 228 to 300; that stretch reads WYSSWVWRYK…EMRKESKRRR (73 aa).

Expressed in leaves, flower buds and flowers.

It is found in the endoplasmic reticulum membrane. Functionally, may play a role in protein folding in the endoplasmic reticulum. The chain is Chaperone protein dnaJ 50 (C50) from Arabidopsis thaliana (Mouse-ear cress).